Consider the following 191-residue polypeptide: Glutathione-independent glyoxalase DJ-1 (191 aa).

Residues glutamate 16, cysteine 111, and histidine 130 contribute to the active site.

This sequence belongs to the peptidase C56 family.

The protein localises to the cytoplasm. Its subcellular location is the nucleus. It carries out the reaction methylglyoxal + H2O = (R)-lactate + H(+). Catalyzes the conversion of methylglyoxal (MG) to D-lactate in a single glutathione (GSH)-independent step. May play a role in detoxifying endogenously produced glyoxals. Involved in protection against reactive oxygen species (ROS). The polypeptide is Glutathione-independent glyoxalase DJ-1 (Schizosaccharomyces pombe (strain 972 / ATCC 24843) (Fission yeast)).